Here is a 480-residue protein sequence, read N- to C-terminus: Altronate oxidoreductase (480 aa).

19–30 (ILQFGEGNFLRG) is an NAD(+) binding site.

This sequence belongs to the mannitol dehydrogenase family. UxaB subfamily.

The enzyme catalyses D-altronate + NAD(+) = keto-D-tagaturonate + NADH + H(+). Its pathway is carbohydrate metabolism; pentose and glucuronate interconversion. The chain is Altronate oxidoreductase from Bacillus subtilis (strain 168).